Here is a 447-residue protein sequence, read N- to C-terminus: N-succinylarginine dihydrolase (447 aa).

Residues 19–28, N110, and 137–138 each bind substrate; these read AGLSFGNEAS and HR. Residue E174 is part of the active site. R212 contributes to the substrate binding site. H248 is an active-site residue. Residues D250 and N359 each coordinate substrate. The active-site Nucleophile is C365.

The protein belongs to the succinylarginine dihydrolase family. As to quaternary structure, homodimer.

It carries out the reaction N(2)-succinyl-L-arginine + 2 H2O + 2 H(+) = N(2)-succinyl-L-ornithine + 2 NH4(+) + CO2. Its pathway is amino-acid degradation; L-arginine degradation via AST pathway; L-glutamate and succinate from L-arginine: step 2/5. Catalyzes the hydrolysis of N(2)-succinylarginine into N(2)-succinylornithine, ammonia and CO(2). In Salmonella typhimurium (strain LT2 / SGSC1412 / ATCC 700720), this protein is N-succinylarginine dihydrolase.